We begin with the raw amino-acid sequence, 190 residues long: Peptidyl-tRNA hydrolase (190 aa).

Tyr-14 lines the tRNA pocket. Residue His-19 is the Proton acceptor of the active site. 3 residues coordinate tRNA: Tyr-64, Asn-66, and Asn-112.

Belongs to the PTH family. Monomer.

It is found in the cytoplasm. The enzyme catalyses an N-acyl-L-alpha-aminoacyl-tRNA + H2O = an N-acyl-L-amino acid + a tRNA + H(+). Functionally, hydrolyzes ribosome-free peptidyl-tRNAs (with 1 or more amino acids incorporated), which drop off the ribosome during protein synthesis, or as a result of ribosome stalling. In terms of biological role, catalyzes the release of premature peptidyl moieties from peptidyl-tRNA molecules trapped in stalled 50S ribosomal subunits, and thus maintains levels of free tRNAs and 50S ribosomes. This chain is Peptidyl-tRNA hydrolase, found in Chlorobium phaeovibrioides (strain DSM 265 / 1930) (Prosthecochloris vibrioformis (strain DSM 265)).